A 358-amino-acid chain; its full sequence is 3-isopropylmalate dehydrogenase (358 aa).

An NAD(+)-binding site is contributed by 77–90; the sequence is GPKWTHLPPDQQPE. 4 residues coordinate substrate: R98, R108, R137, and D226. Mg(2+) contacts are provided by D226, D250, and D254. 284–296 lines the NAD(+) pocket; sequence GSAPDIAGKGIAN.

It belongs to the isocitrate and isopropylmalate dehydrogenases family. LeuB type 1 subfamily. As to quaternary structure, homodimer. It depends on Mg(2+) as a cofactor. Mn(2+) is required as a cofactor.

It is found in the cytoplasm. It catalyses the reaction (2R,3S)-3-isopropylmalate + NAD(+) = 4-methyl-2-oxopentanoate + CO2 + NADH. It participates in amino-acid biosynthesis; L-leucine biosynthesis; L-leucine from 3-methyl-2-oxobutanoate: step 3/4. In terms of biological role, catalyzes the oxidation of 3-carboxy-2-hydroxy-4-methylpentanoate (3-isopropylmalate) to 3-carboxy-4-methyl-2-oxopentanoate. The product decarboxylates to 4-methyl-2 oxopentanoate. The sequence is that of 3-isopropylmalate dehydrogenase from Mannheimia succiniciproducens (strain KCTC 0769BP / MBEL55E).